Consider the following 188-residue polypeptide: Elongation factor P-like protein (188 aa).

The protein belongs to the elongation factor P family.

This chain is Elongation factor P-like protein, found in Vibrio cholerae serotype O1 (strain ATCC 39541 / Classical Ogawa 395 / O395).